The chain runs to 496 residues: Cobyric acid synthase (496 aa).

The 195-residue stretch at 264–458 (HTRIAVVAYP…LHGLFEDAAV (195 aa)) folds into the GATase cobBQ-type domain. Residue Cys-345 is the Nucleophile of the active site. The active site involves His-450.

Belongs to the CobB/CobQ family. CobQ subfamily.

The protein operates within cofactor biosynthesis; adenosylcobalamin biosynthesis. Functionally, catalyzes amidations at positions B, D, E, and G on adenosylcobyrinic A,C-diamide. NH(2) groups are provided by glutamine, and one molecule of ATP is hydrogenolyzed for each amidation. In Acidovorax ebreus (strain TPSY) (Diaphorobacter sp. (strain TPSY)), this protein is Cobyric acid synthase.